The sequence spans 161 residues: Nucleotide-binding protein Shew185_3601 (161 aa).

Belongs to the YajQ family.

In terms of biological role, nucleotide-binding protein. The protein is Nucleotide-binding protein Shew185_3601 of Shewanella baltica (strain OS185).